The sequence spans 673 residues: Potassium-transporting ATPase ATP-binding subunit (673 aa).

The next 4 helical transmembrane spans lie at 34-54 (IMFV…YPDL), 65-85 (VFSI…SEAL), 216-236 (IALF…ILTM), and 253-273 (IALA…AIGI). Catalysis depends on Asp-304, which acts as the 4-aspartylphosphate intermediate. Residues Asp-341, Glu-345, 370 to 377 (FTAETRMS), and Lys-388 each bind ATP. Mg(2+) contacts are provided by Asp-511 and Asp-515. The next 3 helical transmembrane spans lie at 581-601 (FAIL…LNIM), 609-629 (AVLS…PIAM), and 649-669 (VYGL…DLII).

It belongs to the cation transport ATPase (P-type) (TC 3.A.3) family. Type IA subfamily. In terms of assembly, the system is composed of three essential subunits: KdpA, KdpB and KdpC.

It is found in the cell membrane. The enzyme catalyses K(+)(out) + ATP + H2O = K(+)(in) + ADP + phosphate + H(+). Part of the high-affinity ATP-driven potassium transport (or Kdp) system, which catalyzes the hydrolysis of ATP coupled with the electrogenic transport of potassium into the cytoplasm. This subunit is responsible for energy coupling to the transport system and for the release of the potassium ions to the cytoplasm. The polypeptide is Potassium-transporting ATPase ATP-binding subunit (Staphylococcus epidermidis (strain ATCC 35984 / DSM 28319 / BCRC 17069 / CCUG 31568 / BM 3577 / RP62A)).